The sequence spans 121 residues: MKHRVGRVEGEILRELTKILRKDIRDPRLSEVTITAVECTNDLSYATIYYSLLTEDAEKEKEVQEGLDKAKGMMRHLLGQTLTVYKVPELIFKRDNSVKYGSKIDRLIAEVKKQDAERASK.

Belongs to the RbfA family. In terms of assembly, monomer. Binds 30S ribosomal subunits, but not 50S ribosomal subunits or 70S ribosomes.

Its subcellular location is the cytoplasm. One of several proteins that assist in the late maturation steps of the functional core of the 30S ribosomal subunit. Associates with free 30S ribosomal subunits (but not with 30S subunits that are part of 70S ribosomes or polysomes). Required for efficient processing of 16S rRNA. May interact with the 5'-terminal helix region of 16S rRNA. This chain is Ribosome-binding factor A, found in Lactobacillus acidophilus (strain ATCC 700396 / NCK56 / N2 / NCFM).